We begin with the raw amino-acid sequence, 31 residues long: U6-ctenitoxin-Co1a (31 aa).

2 disulfides stabilise this stretch: cysteine 2–cysteine 18 and cysteine 9–cysteine 23.

As to expression, expressed by the venom gland.

The protein localises to the secreted. Antagonist of L-type calcium channels (Cav1/CACNA1). This chain is U6-ctenitoxin-Co1a, found in Ctenus ornatus (Brazilian spider).